The sequence spans 206 residues: Ras-related protein ralB-B (206 aa).

21–28 contributes to the GTP binding site; that stretch reads GSGGVGKS. The Effector region motif lies at 43–51; the sequence is YEPTKADSY. Residues 68 to 72 and 128 to 131 each bind GTP; these read DTAGQ and NKSD. Residues 180-189 are compositionally biased toward basic and acidic residues; it reads KMSENKDKNG. Positions 180–206 are disordered; it reads KMSENKDKNGKKSGKSKKGFKQRCCLL. The segment covering 190–200 has biased composition (basic residues); sequence KKSGKSKKGFK. Position 203 is a cysteine methyl ester (Cys203). Residue Cys203 is the site of S-geranylgeranyl cysteine attachment. A propeptide spans 204-206 (removed in mature form); that stretch reads CLL.

It belongs to the small GTPase superfamily. Ras family. In terms of assembly, interacts with ralbp1 and rap1gds1.

It is found in the cell membrane. The protein resides in the midbody. The enzyme catalyses GTP + H2O = GDP + phosphate + H(+). Its function is as follows. Multifunctional GTPase involved in a variety of cellular processes including gene expression, cell migration, cell proliferation, oncogenic transformation and membrane trafficking. Accomplishes its multiple functions by interacting with distinct downstream effectors. Acts as a GTP sensor for GTP-dependent exocytosis of dense core vesicles. Required both to stabilize the assembly of the exocyst complex and to localize functional exocyst complexes to the leading edge of migrating cells. Required for suppression of apoptosis. In late stages of cytokinesis, upon completion of the bridge formation between dividing cells, mediates exocyst recruitment to the midbody to drive abscission. Regulates the actin cytoskeleton to play a role in gastrulation or neurulation. During the cleavage stages, the GTP-bound form induces a cortical reaction that affects the localization of pigment granules. Activated by the FGF pathway via ras and ral-GDS, but independently of raf. Directs ralbp1 to the plasma membrane. Involved in ligand-dependent receptor mediated endocytosis of the EGF and insulin receptors. The chain is Ras-related protein ralB-B (ralb-b) from Xenopus laevis (African clawed frog).